A 273-amino-acid polypeptide reads, in one-letter code: 3-methyl-2-oxobutanoate hydroxymethyltransferase (273 aa).

2 residues coordinate Mg(2+): aspartate 53 and aspartate 92. 3-methyl-2-oxobutanoate is bound by residues 53 to 54, aspartate 92, and lysine 122; that span reads DS. Glutamate 124 serves as a coordination point for Mg(2+). Glutamate 191 serves as the catalytic Proton acceptor.

The protein belongs to the PanB family. Homodecamer; pentamer of dimers. Requires Mg(2+) as cofactor.

Its subcellular location is the cytoplasm. The catalysed reaction is 3-methyl-2-oxobutanoate + (6R)-5,10-methylene-5,6,7,8-tetrahydrofolate + H2O = 2-dehydropantoate + (6S)-5,6,7,8-tetrahydrofolate. Its pathway is cofactor biosynthesis; (R)-pantothenate biosynthesis; (R)-pantoate from 3-methyl-2-oxobutanoate: step 1/2. Functionally, catalyzes the reversible reaction in which hydroxymethyl group from 5,10-methylenetetrahydrofolate is transferred onto alpha-ketoisovalerate to form ketopantoate. The protein is 3-methyl-2-oxobutanoate hydroxymethyltransferase of Porphyromonas gingivalis (strain ATCC 33277 / DSM 20709 / CIP 103683 / JCM 12257 / NCTC 11834 / 2561).